The sequence spans 306 residues: Ornithine carbamoyltransferase (306 aa).

Carbamoyl phosphate is bound by residues Ser-46–Thr-49, Gln-73, Arg-97, and His-124–Gln-127. Residues Asn-156, Asp-220, and Ser-224–Met-225 each bind L-ornithine. Residues Cys-260 to Leu-261 and Arg-288 contribute to the carbamoyl phosphate site.

The protein belongs to the aspartate/ornithine carbamoyltransferase superfamily. OTCase family.

The protein resides in the cytoplasm. The enzyme catalyses carbamoyl phosphate + L-ornithine = L-citrulline + phosphate + H(+). It functions in the pathway amino-acid biosynthesis; L-arginine biosynthesis; L-arginine from L-ornithine and carbamoyl phosphate: step 1/3. Reversibly catalyzes the transfer of the carbamoyl group from carbamoyl phosphate (CP) to the N(epsilon) atom of ornithine (ORN) to produce L-citrulline. This is Ornithine carbamoyltransferase from Campylobacter jejuni subsp. jejuni serotype O:23/36 (strain 81-176).